A 499-amino-acid chain; its full sequence is MKEFQVYLELDRSLQHDFLYPLIFREYIYALAYDHGLNNSILVENLGYDNKSSLLIVKRLITRMYQQKHLILSANDSNKNQFWGYNKNLYSQIISEGFAVSVEIPFSLQLISSLEEAEIVKSYNLRSIHSIFPFFEEKFPYLNYVSDVRIPYPIHLEILVQTLRYWVKDASSFHLLRLFLYEYCNWNSLITPKKWISTFSKSNPRLFLFLYNFYVCEYESILIFLRNKSSYLRLTSSGVLFERIYFYAKIEHRVEVFDKDFPSTLWFFKDPFIHYVRYQGKSILSSKNTPFFMNKWKYYLIHLWQCHFYVWSQPGKIHINQLSEHSFYFLGYFSNVRLNPSVVRSQMLENSFIIENVMKKLDTIIPIIPLIRSLAKAKFCNVLGHPISKPVWADSSDFYIIDRFLRICRNLSHYYNGSSNKKSLYRIKYILRLSCIKTLARKHKSTVRVFLKRLGSKFLEEFFTEEEEILSLILPRASFTLQRLYRGRIWYLDIFYFHQ.

The protein belongs to the intron maturase 2 family. MatK subfamily.

It is found in the plastid. The protein resides in the chloroplast. Its function is as follows. Usually encoded in the trnK tRNA gene intron. Probably assists in splicing its own and other chloroplast group II introns. This Gymnocladus dioicus (Kentucky coffee tree) protein is Maturase K.